The chain runs to 752 residues: F-box and WD repeat domain containing protein 10B (752 aa).

WD repeat units follow at residues 169–206 (GLNQDITDVCFSPEKDHSSKSATSQVYWTAKTQHTSLP), 451–490 (GHAGSVRALFLCEEENFLLSGSYDLSIRYWDLKSGVCTRI), 493–532 (GHQGTITCMDLCKNRLVSGGRDCQVKVWDVDTGKCLKTFR), 534–569 (KDPILATRINDTYIVSSCERGLVKVWHIAMAQLVKT), 572–609 (GHEGAVKCLFFDQWHLLSGSTDGLVMAWSMVGKYERCL), and 611–652 (AFKH…KVIK).

As to expression, expressed in pancreas, heart and skeletal muscle.

The polypeptide is F-box and WD repeat domain containing protein 10B (Homo sapiens (Human)).